A 189-amino-acid polypeptide reads, in one-letter code: Penicillin-binding protein activator LpoB (189 aa).

A signal peptide spans 1 to 16 (MRRILFVALSVMFLAG). Cysteine 17 carries N-palmitoyl cysteine lipidation. Cysteine 17 carries the S-diacylglycerol cysteine lipid modification. Positions 18-52 (PSLPPEQPEPPTPVVPVTPSEKPTPPSEKVPEPPK) are disordered. Residues 19-45 (SLPPEQPEPPTPVVPVTPSEKPTPPSE) are compositionally biased toward pro residues.

This sequence belongs to the LpoB family. In terms of assembly, interacts with PBP1b.

The protein resides in the cell outer membrane. In terms of biological role, regulator of peptidoglycan synthesis that is essential for the function of penicillin-binding protein 1B (PBP1b). The chain is Penicillin-binding protein activator LpoB from Photorhabdus laumondii subsp. laumondii (strain DSM 15139 / CIP 105565 / TT01) (Photorhabdus luminescens subsp. laumondii).